Reading from the N-terminus, the 259-residue chain is MNTQIIQLEDTKLEVNNLNFHYGDFHALKNINMRIAKHKVTAFIGPSGCGKSTLLRSFNRIFELYPNQYATGEIKLDGENLLTSPMDISLIRAKVGMVFQKPTPFPMSIYDNVAFGIRLFEKLSKADLNDRVEWALSKAALWNEVKDKLNQSGDSLSGGQQQRLCIARGIAIKPEVLLLDEPCSALDPISTAKIEELISELKHDYTVVMVTHNMQQAARCSDYTAFMYLGELIEFDETAKIFDKPRLQRTEDYIKGRMG.

The 242-residue stretch at 13-254 (LEVNNLNFHY…PRLQRTEDYI (242 aa)) folds into the ABC transporter domain. Position 45 to 52 (45 to 52 (GPSGCGKS)) interacts with ATP.

This sequence belongs to the ABC transporter superfamily. Phosphate importer (TC 3.A.1.7) family. As to quaternary structure, the complex is composed of two ATP-binding proteins (PstB), two transmembrane proteins (PstC and PstA) and a solute-binding protein (PstS).

The protein localises to the cell inner membrane. The enzyme catalyses phosphate(out) + ATP + H2O = ADP + 2 phosphate(in) + H(+). Functionally, part of the ABC transporter complex PstSACB involved in phosphate import. Responsible for energy coupling to the transport system. This chain is Phosphate import ATP-binding protein PstB, found in Pasteurella multocida (strain Pm70).